The following is a 344-amino-acid chain: Arginine N-succinyltransferase (344 aa).

Succinyl-CoA is bound at residue L125. The active-site Proton donor is the H229.

This sequence belongs to the arginine N-succinyltransferase family.

It carries out the reaction succinyl-CoA + L-arginine = N(2)-succinyl-L-arginine + CoA + H(+). It functions in the pathway amino-acid degradation; L-arginine degradation via AST pathway; L-glutamate and succinate from L-arginine: step 1/5. Its function is as follows. Catalyzes the transfer of succinyl-CoA to arginine to produce N(2)-succinylarginine. This chain is Arginine N-succinyltransferase, found in Escherichia coli O6:H1 (strain CFT073 / ATCC 700928 / UPEC).